Consider the following 250-residue polypeptide: Kv channel-interacting protein 4 (250 aa).

The KIS stretch occupies residues 2 to 44 (NVRRVESISAQLEEASSTGGFLYAQNNTKRSIKERLMKLLPCS). Phosphoserine is present on residues S17 and S56. In terms of domain architecture, EF-hand 1; degenerate spans 61–117 (LEMATVRHRPEALELLEAQSKFTKKELQILYRGFKNECPSGVVNEETFKEIYSQFFP). 3 EF-hand domains span residues 120–155 (DSTT…LLRG), 156–191 (TVQE…IYDM), and 204–239 (APRQ…DENI). The Ca(2+) site is built by D133, D135, N137, D144, D169, N171, D173, Y175, E180, D217, N219, D221, and E228. Residues 237–250 (ENIMRSMQLFENVI) are interaction with KCND2.

Belongs to the recoverin family. Component of heteromultimeric potassium channels. Identified in potassium channel complexes containing KCND1, KCND2, KCND3, KCNIP1, KCNIP2, KCNIP3, KCNIP4, DPP6 and DPP10. Interacts with the C-terminus of PSEN2 and probably PSEN1. Interacts with KCND2 and KCND3. As to expression, expressed in brain. Highly expressed by neurons in layers II-IV of cortex and in hippocampus, thalamus and the Purkinje cell layer of the cerebellum.

It is found in the cell membrane. The protein localises to the cytoplasm. The protein resides in the peroxisome. Its function is as follows. Regulatory subunit of Kv4/D (Shal)-type voltage-gated rapidly inactivating A-type potassium channels, such as KCND2/Kv4.2 and KCND3/Kv4.3. Modulates channel expression at the cell membrane, gating characteristics, inactivation kinetics and rate of recovery from inactivation in a calcium-dependent and isoform-specific manner. This is Kv channel-interacting protein 4 (Kcnip4) from Mus musculus (Mouse).